A 468-amino-acid chain; its full sequence is 6-phosphogluconate dehydrogenase, decarboxylating (468 aa).

NADP(+) is bound by residues 10-15 (GMAVMG), 33-35 (NRS), 74-76 (IKS), and Asn102. Substrate contacts are provided by residues Asn102 and 128-130 (SGG). The active-site Proton acceptor is Lys182. Residue 185–186 (HN) coordinates substrate. Glu189 functions as the Proton donor in the catalytic mechanism. Tyr190, Lys259, Arg286, Arg445, and His451 together coordinate substrate.

This sequence belongs to the 6-phosphogluconate dehydrogenase family. Homodimer.

The enzyme catalyses 6-phospho-D-gluconate + NADP(+) = D-ribulose 5-phosphate + CO2 + NADPH. It functions in the pathway carbohydrate degradation; pentose phosphate pathway; D-ribulose 5-phosphate from D-glucose 6-phosphate (oxidative stage): step 3/3. Functionally, catalyzes the oxidative decarboxylation of 6-phosphogluconate to ribulose 5-phosphate and CO(2), with concomitant reduction of NADP to NADPH. The protein is 6-phosphogluconate dehydrogenase, decarboxylating (gnd) of Buchnera aphidicola subsp. Baizongia pistaciae (strain Bp).